Consider the following 1103-residue polypeptide: Isoleucine--tRNA ligase (1103 aa).

The disordered stretch occupies residues 1-25 (MSENVYPKANEGGETAHVAPNPSFP). The short motif at 65-75 (PFANGLPHYGH) is the 'HIGH' region element. Residues 649–653 (KMSKH) carry the 'KMSKS' region motif. Lys652 lines the ATP pocket.

The protein belongs to the class-I aminoacyl-tRNA synthetase family. IleS type 2 subfamily. As to quaternary structure, monomer. The cofactor is Zn(2+).

It localises to the cytoplasm. The enzyme catalyses tRNA(Ile) + L-isoleucine + ATP = L-isoleucyl-tRNA(Ile) + AMP + diphosphate. Catalyzes the attachment of isoleucine to tRNA(Ile). As IleRS can inadvertently accommodate and process structurally similar amino acids such as valine, to avoid such errors it has two additional distinct tRNA(Ile)-dependent editing activities. One activity is designated as 'pretransfer' editing and involves the hydrolysis of activated Val-AMP. The other activity is designated 'posttransfer' editing and involves deacylation of mischarged Val-tRNA(Ile). The polypeptide is Isoleucine--tRNA ligase (Bifidobacterium longum (strain NCC 2705)).